Reading from the N-terminus, the 95-residue chain is Osteocalcin-2 (95 aa).

A signal peptide spans 1 to 23 (MRTLSLLTLLALAALCLSDLTDA). The propeptide occupies 24–49 (KPSGPESDKAFMSKQEGNKVVNRLRR). The Gla domain occupies 46-92 (RLRRYLGASVPSPDPLEPTREQCELNPACDELSDQYGLKTAYKRIYG). The Ca(2+) site is built by Glu62, Glu66, Glu69, and Asp75. An intrachain disulfide couples Cys68 to Cys74.

Belongs to the osteocalcin/matrix Gla protein family. Post-translationally, gamma-carboxyglutamate residues are formed by vitamin K dependent carboxylation by GGCX. These residues are essential for the binding of calcium. Carboxylated in a Ptprv/Esp-dependent process. Decarboxylation promotes the hormone activity. As to expression, bone.

It is found in the secreted. Functionally, the carboxylated form is one of the main organic components of the bone matrix, which constitutes 1-2% of the total bone protein: it acts as a negative regulator of bone formation and is required to limit bone formation without impairing bone resorption or mineralization. The carboxylated form binds strongly to apatite and calcium. Its function is as follows. The uncarboxylated form acts as a hormone secreted by osteoblasts, which regulates different cellular processes, such as energy metabolism, male fertility and brain development. Regulates of energy metabolism by acting as a hormone favoring pancreatic beta-cell proliferation, insulin secretion and sensitivity and energy expenditure. Uncarboxylated osteocalcin hormone also promotes testosterone production in the testes: acts as a ligand for G protein-coupled receptor GPRC6A at the surface of Leydig cells, initiating a signaling response that promotes the expression of enzymes required for testosterone synthesis in a CREB-dependent manner. Also acts as a regulator of brain development: osteocalcin hormone crosses the blood-brain barrier and acts as a ligand for GPR158 on neurons, initiating a signaling response that prevents neuronal apoptosis in the hippocampus, favors the synthesis of all monoamine neurotransmitters and inhibits that of gamma-aminobutyric acid (GABA). Osteocalcin also crosses the placenta during pregnancy and maternal osteocalcin is required for fetal brain development. In Mus musculus (Mouse), this protein is Osteocalcin-2 (Bglap2).